The primary structure comprises 344 residues: Anthranilate phosphoribosyltransferase (344 aa).

5-phospho-alpha-D-ribose 1-diphosphate is bound by residues Gly86, 89–90 (GD), Thr94, 96–99 (NIST), 114–122 (KHGNKSASG), and Ser126. Residue Gly86 participates in anthranilate binding. A Mg(2+)-binding site is contributed by Ser98. Residue Asn117 coordinates anthranilate. An anthranilate-binding site is contributed by Arg172. Asp231 and Glu232 together coordinate Mg(2+).

This sequence belongs to the anthranilate phosphoribosyltransferase family. In terms of assembly, homodimer. It depends on Mg(2+) as a cofactor.

The catalysed reaction is N-(5-phospho-beta-D-ribosyl)anthranilate + diphosphate = 5-phospho-alpha-D-ribose 1-diphosphate + anthranilate. The protein operates within amino-acid biosynthesis; L-tryptophan biosynthesis; L-tryptophan from chorismate: step 2/5. Functionally, catalyzes the transfer of the phosphoribosyl group of 5-phosphorylribose-1-pyrophosphate (PRPP) to anthranilate to yield N-(5'-phosphoribosyl)-anthranilate (PRA). This is Anthranilate phosphoribosyltransferase from Prochlorococcus marinus (strain MIT 9215).